Reading from the N-terminus, the 447-residue chain is ATP-dependent protease ATPase subunit HslU (447 aa).

Residues I18, 60-65, D260, E325, and R397 contribute to the ATP site; that span reads GVGKTE.

This sequence belongs to the ClpX chaperone family. HslU subfamily. A double ring-shaped homohexamer of HslV is capped on each side by a ring-shaped HslU homohexamer. The assembly of the HslU/HslV complex is dependent on binding of ATP.

The protein resides in the cytoplasm. Functionally, ATPase subunit of a proteasome-like degradation complex; this subunit has chaperone activity. The binding of ATP and its subsequent hydrolysis by HslU are essential for unfolding of protein substrates subsequently hydrolyzed by HslV. HslU recognizes the N-terminal part of its protein substrates and unfolds these before they are guided to HslV for hydrolysis. This chain is ATP-dependent protease ATPase subunit HslU, found in Paraburkholderia phymatum (strain DSM 17167 / CIP 108236 / LMG 21445 / STM815) (Burkholderia phymatum).